A 238-amino-acid polypeptide reads, in one-letter code: ATP-dependent Clp protease ATP-binding subunit CLPT1, chloroplastic (238 aa).

The N-terminal 64 residues, 1-64, are a transit peptide targeting the chloroplast; that stretch reads MASYTVSFIP…VPKLRCLTSA (64 aa). Residues 83–228 enclose the Clp R domain; that stretch reads IPKWSARAIK…KEVEKSMNED (146 aa). Repeat regions lie at residues 86–151 and 163–228; these read WSAR…LGKS and LTEP…MNED.

Belongs to the ClpA/ClpB family. In terms of assembly, monomer and homodimer. Binds to the CLP3-6 ring (P-ring). The dimers monomerize before association to the P-ring. Component of the chloroplastic Clp protease core complex which consist of at least 16 proteins: CLPP4 (3 copies), CLPP5 (3 copies), CLPR4 (2 copies), ClpP1 (1 copy), CLPP6 (1 copy), CLPR2 (1 copy), CLPT1 (1 copy), CLPT2 (1 copy) and 3 copies of CLPP3 and/or CLPR1 and/or CLPR3. Interacts with CLPC2 and CLPD. Interacts with CPN21. No interactions with CLPS1.

The protein localises to the plastid. It is found in the chloroplast. Functionally, accessory protein regulating the assembly of the plastidial Clp protease system. CLPT1 first binds to the heptameric P-ring containing the CLP3-6 subunits followed by CLPT2, and only then does the P-ring combine with the R-ring composed of the clpP1 and CLPR1-4 subunits. Once the core complex is fully assembled, it then associates to the CLPC chaperone partner to form the functional protease. CLPT1 and CLPT2 are partially redundant. The sequence is that of ATP-dependent Clp protease ATP-binding subunit CLPT1, chloroplastic from Arabidopsis thaliana (Mouse-ear cress).